We begin with the raw amino-acid sequence, 539 residues long: O-phosphoserine--tRNA(Cys) ligase (539 aa).

Residues 188–190 (HMT), 233–235 (SAS), 275–276 (YY), and Asn327 contribute to the substrate site.

It belongs to the class-II aminoacyl-tRNA synthetase family. O-phosphoseryl-tRNA(Cys) synthetase subfamily. Homotetramer. Interacts with SepCysS.

It catalyses the reaction tRNA(Cys) + O-phospho-L-serine + ATP = O-phospho-L-seryl-tRNA(Cys) + AMP + diphosphate. In terms of biological role, catalyzes the attachment of O-phosphoserine (Sep) to tRNA(Cys). This chain is O-phosphoserine--tRNA(Cys) ligase, found in Methanosarcina barkeri (strain Fusaro / DSM 804).